The following is a 388-amino-acid chain: Succinate--CoA ligase [ADP-forming] subunit beta (388 aa).

The ATP-grasp domain maps to 9–244; that stretch reads KEILRKFGVA…LDEEDPAEIE (236 aa). Residues Lys46, 53–55, Glu99, Ala102, and Glu107 contribute to the ATP site; that span reads GRG. The Mg(2+) site is built by Asn199 and Asp213. Substrate-binding positions include Asn264 and 321–323; that span reads GIM.

The protein belongs to the succinate/malate CoA ligase beta subunit family. As to quaternary structure, heterotetramer of two alpha and two beta subunits. Mg(2+) serves as cofactor.

The catalysed reaction is succinate + ATP + CoA = succinyl-CoA + ADP + phosphate. It carries out the reaction GTP + succinate + CoA = succinyl-CoA + GDP + phosphate. The protein operates within carbohydrate metabolism; tricarboxylic acid cycle; succinate from succinyl-CoA (ligase route): step 1/1. Succinyl-CoA synthetase functions in the citric acid cycle (TCA), coupling the hydrolysis of succinyl-CoA to the synthesis of either ATP or GTP and thus represents the only step of substrate-level phosphorylation in the TCA. The beta subunit provides nucleotide specificity of the enzyme and binds the substrate succinate, while the binding sites for coenzyme A and phosphate are found in the alpha subunit. The sequence is that of Succinate--CoA ligase [ADP-forming] subunit beta from Burkholderia mallei (strain NCTC 10247).